Consider the following 379-residue polypeptide: Homoserine O-succinyltransferase (379 aa).

An AB hydrolase-1 domain is found at 51 to 360; it reads NAVLICHALS…DAPQGHDAFL (310 aa). S157 acts as the Nucleophile in catalysis. R227 serves as a coordination point for substrate. Catalysis depends on residues D323 and H356. D357 serves as a coordination point for substrate.

This sequence belongs to the AB hydrolase superfamily. MetX family. As to quaternary structure, homodimer.

The protein localises to the cytoplasm. It catalyses the reaction L-homoserine + succinyl-CoA = O-succinyl-L-homoserine + CoA. It functions in the pathway amino-acid biosynthesis; L-methionine biosynthesis via de novo pathway; O-succinyl-L-homoserine from L-homoserine: step 1/1. Requires MetW for activity. In terms of biological role, transfers a succinyl group from succinyl-CoA to L-homoserine, forming succinyl-L-homoserine. This is Homoserine O-succinyltransferase from Pseudomonas syringae pv. syringae (strain B728a).